The primary structure comprises 236 residues: Small ribosomal subunit protein uS2c (236 aa).

The protein belongs to the universal ribosomal protein uS2 family.

It is found in the plastid. The protein resides in the chloroplast. The protein is Small ribosomal subunit protein uS2c (rps2) of Oryza sativa (Rice).